The sequence spans 145 residues: D-aminoacyl-tRNA deacylase (145 aa).

The Gly-cisPro motif, important for rejection of L-amino acids motif lies at 137 to 138; the sequence is GP.

It belongs to the DTD family. Homodimer.

The protein resides in the cytoplasm. The catalysed reaction is glycyl-tRNA(Ala) + H2O = tRNA(Ala) + glycine + H(+). It carries out the reaction a D-aminoacyl-tRNA + H2O = a tRNA + a D-alpha-amino acid + H(+). Its function is as follows. An aminoacyl-tRNA editing enzyme that deacylates mischarged D-aminoacyl-tRNAs. Also deacylates mischarged glycyl-tRNA(Ala), protecting cells against glycine mischarging by AlaRS. Acts via tRNA-based rather than protein-based catalysis; rejects L-amino acids rather than detecting D-amino acids in the active site. By recycling D-aminoacyl-tRNA to D-amino acids and free tRNA molecules, this enzyme counteracts the toxicity associated with the formation of D-aminoacyl-tRNA entities in vivo and helps enforce protein L-homochirality. In Cereibacter sphaeroides (strain ATCC 17029 / ATH 2.4.9) (Rhodobacter sphaeroides), this protein is D-aminoacyl-tRNA deacylase.